The chain runs to 287 residues: Probable glucose uptake protein GlcU (287 aa).

A run of 9 helical transmembrane segments spans residues 7-29 (LIALLPALFWGSVVIINVFVGGG), 34-56 (IRGTTLGTLFIGFSLLATGHAAF), 58-75 (NLTVIIVGLVSGALWAFG), 114-136 (WSTIVQVVMGLIAMILLVVGISL), 156-178 (MGILLLSTIGYVGYVVLGDIFGV), 183-202 (ALFFQSIGMAIGGLILSMNH), 209-228 (TALNLIPGVIWGIGNLFMFY), 233-255 (VGVATSFSLSQLLVIVSTLGGIF), and 267-286 (IGIWSGIIVIVIASIILGNL).

The protein belongs to the GRP transporter (TC 2.A.7.5) family.

Its subcellular location is the cell membrane. Involved in the uptake of glucose. The chain is Probable glucose uptake protein GlcU (glcU) from Staphylococcus epidermidis (strain ATCC 35984 / DSM 28319 / BCRC 17069 / CCUG 31568 / BM 3577 / RP62A).